The following is a 1889-amino-acid chain: E3 ubiquitin-protein ligase UBR3 (1889 aa).

The tract at residues Met1–Leu27 is disordered. The UBR-type zinc finger occupies Ala118 to Ile189. A disordered region spans residues Leu338–Lys362. 2 positions are modified to phosphoserine: Ser343 and Ser344. 2 consecutive transmembrane segments (helical) span residues Met761–Met781 and Leu919–Asp939. The stretch at Lys1167 to Ser1199 forms a coiled coil. Residue Ser1199 is modified to Phosphoserine. The segment at Asp1306–Arg1364 adopts an RING-type; degenerate zinc-finger fold. The chain crosses the membrane as a helical span at residues Gln1807–Ile1827.

The protein belongs to the E3 ubiquitin-protein ligase UBR1-like family. In terms of assembly, interacts with UBE2A and UBE2B. As to expression, expressed in numerous cells of the smell, touch, vision, hearing and taste senses. Expressed in cells of the olfactory pathway, including the olfactory cell layer of the main olfactory epithelium (MOE), a mitral neuron cell layer of the olfactory bulb (OB), and a pyramidal cell layer of the piriform cortex of the olfactory cortex (OC). Expressed in the vomeronasal sensory epithelium of the vomeronasal organ (VNO) and the mitral cells of the accessory olfactory bulb. Expressed in tactile tissues, including the dorsal root ganglion, trigeminal ganglion and follicle-sinus complexes. Expressed in cells between hair follicle and sinus and also in the region of the rete ridge collar. Expressed in taste buds of the fungiform, circumvallate, and foliate papillae. Expressed in the spiral ganglion, the organ of Corti of the cochlea in the inner ear, in the sensory epithelium of macula and vestibular ganglion of the balancing system (at protein level). Expressed in the liver and skeletal muscle.

It is found in the membrane. It catalyses the reaction S-ubiquitinyl-[E2 ubiquitin-conjugating enzyme]-L-cysteine + [acceptor protein]-L-lysine = [E2 ubiquitin-conjugating enzyme]-L-cysteine + N(6)-ubiquitinyl-[acceptor protein]-L-lysine.. It participates in protein modification; protein ubiquitination. Its function is as follows. E3 ubiquitin-protein ligase which is a component of the N-end rule pathway. Does not bind to proteins bearing specific N-terminal residues that are destabilizing according to the N-end rule, leading to their ubiquitination and subsequent degradation. May play a role in Shh signaling by mediating the ubiquitination of Kif7. May be important for MYH9 function in certain tissues, possibly by regulating the ubiquitination of MYH9 and consequently affecting its interaction with MYO7A. This is E3 ubiquitin-protein ligase UBR3 (Ubr3) from Mus musculus (Mouse).